The primary structure comprises 82 residues: MVTIRLARHGAKKRPFYQVVVTDSRNARNGRFIERVGFFNPIANGAEEETRLDLDRIAHWVGQGATVSDRVAALIKAANKAA.

It belongs to the bacterial ribosomal protein bS16 family.

The polypeptide is Small ribosomal subunit protein bS16 (Klebsiella pneumoniae subsp. pneumoniae (strain ATCC 700721 / MGH 78578)).